We begin with the raw amino-acid sequence, 137 residues long: MTLMVRVITPDRTVWDAPSEEVILPATSGQLGILTGHAPLLTAIGNGVMRVKADGKWLAIAVMGGFAEVENNEVTVLVNRAERGEKVDKAAAQALLDEASKVLNTSSDKQERLQAKLDQQRARALIQAAEMGSKTGS.

This sequence belongs to the ATPase epsilon chain family. F-type ATPases have 2 components, CF(1) - the catalytic core - and CF(0) - the membrane proton channel. CF(1) has five subunits: alpha(3), beta(3), gamma(1), delta(1), epsilon(1). CF(0) has three main subunits: a, b and c.

Its subcellular location is the cellular thylakoid membrane. Its function is as follows. Produces ATP from ADP in the presence of a proton gradient across the membrane. This is ATP synthase epsilon chain from Synechococcus sp. (strain JA-2-3B'a(2-13)) (Cyanobacteria bacterium Yellowstone B-Prime).